Here is a 114-residue protein sequence, read N- to C-terminus: Large ribosomal subunit protein bL20c (114 aa).

The protein belongs to the bacterial ribosomal protein bL20 family.

Its subcellular location is the plastid. In terms of biological role, binds directly to 23S ribosomal RNA and is necessary for the in vitro assembly process of the 50S ribosomal subunit. It is not involved in the protein synthesizing functions of that subunit. The protein is Large ribosomal subunit protein bL20c of Prototheca wickerhamii.